Reading from the N-terminus, the 255-residue chain is Uridylate kinase (255 aa).

22–25 is a binding site for ATP; the sequence is KLSG. Residues 30-35 form an involved in allosteric activation by GTP region; that stretch reads GNGGYG. UMP is bound at residue Gly64. Positions 65 and 69 each coordinate ATP. Residues Asp85 and 146–153 contribute to the UMP site; that span reads TGNPFFTT. Asn174, Tyr180, and Asp183 together coordinate ATP.

This sequence belongs to the UMP kinase family. Homohexamer.

The protein localises to the cytoplasm. It catalyses the reaction UMP + ATP = UDP + ADP. Its pathway is pyrimidine metabolism; CTP biosynthesis via de novo pathway; UDP from UMP (UMPK route): step 1/1. With respect to regulation, allosterically activated by GTP. Inhibited by UTP. Its function is as follows. Catalyzes the reversible phosphorylation of UMP to UDP. This is Uridylate kinase from Rubrobacter xylanophilus (strain DSM 9941 / JCM 11954 / NBRC 16129 / PRD-1).